The following is a 126-amino-acid chain: Regulatory protein MgsR (126 aa).

Cysteines 13 and 16 form a disulfide.

This sequence belongs to the ArsC family.

The protein resides in the cytoplasm. Its activity is regulated as follows. Activity is controlled at multiple levels. Regulation includes a positive autoregulatory loop on mgsR transcription and a post-translational redox-sensitive activation step by an intramolecular disulfide bond formation in response to ethanol stress. In addition, protein stability is strictly controlled by rapid proteolytic degradation by the ClpXP and ClpCP proteases. The McsB protein-arginine kinase might serve as a proteolytic adapter for the ClpX ATPase in the degradation mechanism of MgsR. Regulates transcription of a subregulon within the general stress response. Exerts positive and negative effects in response to ethanol stress. This is Regulatory protein MgsR from Bacillus subtilis (strain 168).